Reading from the N-terminus, the 210-residue chain is Outer-membrane lipoprotein LolB (210 aa).

Residues 1–18 (MKKLTKLLSLTLLFALAG) form the signal peptide. Cys-19 carries N-palmitoyl cysteine lipidation. Cys-19 carries S-diacylglycerol cysteine lipidation.

This sequence belongs to the LolB family. In terms of assembly, monomer.

Its subcellular location is the cell outer membrane. Its function is as follows. Plays a critical role in the incorporation of lipoproteins in the outer membrane after they are released by the LolA protein. The polypeptide is Outer-membrane lipoprotein LolB (Glaesserella parasuis serovar 5 (strain SH0165) (Haemophilus parasuis)).